Reading from the N-terminus, the 305-residue chain is Small ribosomal subunit protein uS3 (305 aa).

Residues 17-86 (IDEFFSEELS…DPQVDVQEVD (70 aa)) form the KH type-2 domain. Acidic residues-rich tracts occupy residues 207–262 (EPEG…EAET) and 272–305 (AAEEPDEALDEDVEAEAEELLDEMEDETTDEEET). Positions 207–305 (EPEGDVEELL…EDETTDEEET (99 aa)) are disordered.

It belongs to the universal ribosomal protein uS3 family. As to quaternary structure, part of the 30S ribosomal subunit.

Its function is as follows. Binds the lower part of the 30S subunit head. The sequence is that of Small ribosomal subunit protein uS3 from Natronomonas pharaonis (strain ATCC 35678 / DSM 2160 / CIP 103997 / JCM 8858 / NBRC 14720 / NCIMB 2260 / Gabara) (Halobacterium pharaonis).